Consider the following 51-residue polypeptide: Large ribosomal subunit protein eL39 (51 aa).

It belongs to the eukaryotic ribosomal protein eL39 family. In terms of assembly, interacts with impact.

This chain is Large ribosomal subunit protein eL39 (rpl39), found in Ictalurus punctatus (Channel catfish).